A 1961-amino-acid chain; its full sequence is Ankyrin-3 (1961 aa).

The segment covering 1–10 (MSEEPKEKPA) has biased composition (basic and acidic residues). Positions 1 to 25 (MSEEPKEKPAKPAHRKRKGKKSDAN) are disordered. Over residues 11-20 (KPAHRKRKGK) the composition is skewed to basic residues. At Ser-22 the chain carries Phosphoserine. ANK repeat units lie at residues 56–85 (NGLN…NVDA), 89–118 (KGNT…NVNA), 122–151 (NGFT…SQSL), 155–184 (DGFT…KGKV), 186–213 (LPAL…NADV), 217–246 (SGFT…AVDF), 250–279 (NDIT…KIDA), 283–312 (DGLT…PILS), 316–345 (NGLS…PVDD), 349–378 (DYLT…SPNA), 382–411 (NGFT…SIQA), 415–444 (SGLT…SPNT), 448–477 (RGET…QVEA), 481–510 (DDQT…SPNA), 514–543 (SGYT…SLSI), 547–576 (KGFT…SPDA), 580–609 (SGLT…SPHA), 613–642 (NGYT…DANA), 646–675 (QGIA…NVNL), 679–708 (SGLT…HVDA), 712–741 (MGYT…KVNA), 745–774 (NGYT…SPNE), and 778–807 (NGNT…EIMT). Ser-606 bears the Phosphoserine mark. Leu-732 is modified (phosphoserine). Residues Ser-830, Ser-844, Ser-850, Ser-873, Ser-914, Ser-917, Ser-923, Ser-958, Ser-960, and Ser-1114 each carry the phosphoserine modification. 2 consecutive ZU5 domains span residues 985–1140 (FLVS…VVSR) and 1142–1289 (KQES…LADC). The interval 1274-1408 (VSFTTNVSAR…SIKIRDTSQE (135 aa)) is UPA domain. Residues Ser-1451, Ser-1462, Ser-1470, Ser-1473, and Gly-1560 each carry the phosphoserine modification. Residues 1478 to 1562 (TDIRMAIVAD…DIVTLLEGPI (85 aa)) form the Death domain. Disordered stretches follow at residues 1606-1678 (PNPF…DPLD), 1698-1740 (SVPG…VTED), 1784-1818 (WQNE…DQAR), 1844-1884 (PEAK…PVSP), and 1915-1961 (MTRT…KKTH). Basic and acidic residues predominate over residues 1725 to 1740 (QQEKGKSGPDEEVTED). Over residues 1784–1795 (WQNETPSGSLES) the composition is skewed to polar residues. Phosphoserine is present on residues Ser-1795, Ser-1813, and Ser-1883. The span at 1808–1818 (DRLDDSSDQAR) shows a compositional bias: basic and acidic residues. Positions 1933 to 1961 (GSTRSEPKQGEGYKVKTKKEIRNVEKKTH) are enriched in basic and acidic residues.

As to quaternary structure, may be a constituent of a NFASC/NRCAM/ankyrin G complex. Interacts with RHBG. Directly interacts with DMD and betaDAG1; this interaction does not interfere with DMD-binding and is required for DMD and betaDAG1 retention at costameres. Interacts (via N-terminal ANK repeats) with SCHIP1 isoform 7 (via C-terminus); this interaction is required for the localization at axon initial segments (AISs) and nodes of Ranvier (NRs). Interacts with PLEC and FLNC. Interacts with KCNA1; this inhibits channel activity. Interacts with SCN5A. Interacts with PKP2 and GJA1/CX43. In terms of tissue distribution, expressed in many epithelial tissues, muscles and axons. Expressed in kidney, brain, skin, lung, liver, intestine, pancreas, heart and testis (at protein level). In testis, expressed in Leydig cells, but very weakly or not at all in Sertoli cells or seminiferous tubules. Expressed in macrophages (at protein level).

It localises to the cytoplasm. Its subcellular location is the cytoskeleton. It is found in the cell projection. The protein localises to the axon. The protein resides in the cell membrane. It localises to the sarcolemma. Its subcellular location is the postsynaptic cell membrane. It is found in the lysosome. The protein localises to the T-tubule. In terms of biological role, membrane-cytoskeleton linker. May participate in the maintenance/targeting of ion channels and cell adhesion molecules at the nodes of Ranvier and axonal initial segments. In skeletal muscle, required for costamere localization of DMD and betaDAG1. Regulates KCNA1 channel activity in function of dietary Mg(2+) levels, and thereby contributes to the regulation of renal Mg(2+) reabsorption. Required for intracellular adhesion and junctional conductance in myocytes, potentially via stabilization of GJA1/CX43 protein abundance and promotion of PKP2, GJA1/CX43, and SCN5A/Nav1.5 localization to cell-cell junctions. The polypeptide is Ankyrin-3 (Ank3) (Mus musculus (Mouse)).